We begin with the raw amino-acid sequence, 374 residues long: C-C chemokine receptor type 6 (374 aa).

The Extracellular segment spans residues methionine 1 to leucine 47. N-linked (GlcNAc...) asparagine glycans are attached at residues asparagine 7 and asparagine 23. Residues phenylalanine 48–tyrosine 74 form a helical membrane-spanning segment. The Cytoplasmic segment spans residues lysine 75–valine 83. A helical membrane pass occupies residues tyrosine 84–valine 104. At serine 105–lysine 119 the chain is on the extracellular side. A disulfide bond links cysteine 118 and cysteine 197. The helical transmembrane segment at leucine 120–methionine 141 threads the bilayer. Residues aspartate 142–arginine 159 are Cytoplasmic-facing. Residues threonine 160–serine 180 traverse the membrane as a helical segment. Residues serine 181–lysine 211 are Extracellular-facing. A helical membrane pass occupies residues leucine 212–valine 238. The Cytoplasmic segment spans residues lysine 239–arginine 254. Residues valine 255–alanine 279 traverse the membrane as a helical segment. Residues asparagine 280–valine 303 are Extracellular-facing. The chain crosses the membrane as a helical span at residues leucine 304–glutamine 321. Topologically, residues lysine 322–methionine 374 are cytoplasmic.

Belongs to the G-protein coupled receptor 1 family. In terms of tissue distribution, sperm. Mainly localized in the tail and in the postacrosomal region but is also found in the midpiece and basal region in a small percentage of sperm cells. Reduced levels found in the sperms of asthenozoospermia and leukocytospermia patients (at protein level). Spleen, lymph nodes, appendix, and fetal liver. Expressed in lymphocytes, T-cells and B-cells but not in natural killer cells, monocytes or granulocytes.

The protein resides in the cell membrane. It is found in the cell surface. Receptor for the C-C type chemokine CCL20. Binds to CCL20 and subsequently transduces a signal by increasing the intracellular calcium ion levels. Although CCL20 is its major ligand it can also act as a receptor for non-chemokine ligands such as beta-defensins. Binds to defensin DEFB1 leading to increase in intracellular calcium ions and cAMP levels. Its binding to DEFB1 is essential for the function of DEFB1 in regulating sperm motility and bactericidal activity. Binds to defensins DEFB4 and DEFB4A/B and mediates their chemotactic effects. The ligand-receptor pair CCL20-CCR6 is responsible for the chemotaxis of dendritic cells (DC), effector/ memory T-cells and B-cells and plays an important role at skin and mucosal surfaces under homeostatic and inflammatory conditions, as well as in pathology, including cancer and various autoimmune diseases. CCR6-mediated signals are essential for immune responses to microbes in the intestinal mucosa and in the modulation of inflammatory responses initiated by tissue insult and trauma. CCR6 is essential for the recruitment of both the pro-inflammatory IL17 producing helper T-cells (Th17) and the regulatory T-cells (Treg) to sites of inflammation. Required for the normal migration of Th17 cells in Peyers-patches and other related tissue sites of the intestine and plays a role in regulating effector T-cell balance and distribution in inflamed intestine. Plays an important role in the coordination of early thymocyte precursor migration events important for normal subsequent thymocyte precursor development, but is not required for the formation of normal thymic natural regulatory T-cells (nTregs). Required for optimal differentiation of DN2 and DN3 thymocyte precursors. Essential for B-cell localization in the subepithelial dome of Peyers-patches and for efficient B-cell isotype switching to IgA in the Peyers-patches. Essential for appropriate anatomical distribution of memory B-cells in the spleen and for the secondary recall response of memory B-cells. Positively regulates sperm motility and chemotaxis via its binding to CCL20. This Homo sapiens (Human) protein is C-C chemokine receptor type 6 (CCR6).